The sequence spans 207 residues: Thymidylate kinase (207 aa).

ATP is bound at residue 7–14 (GPEGAGKS).

Belongs to the thymidylate kinase family.

The enzyme catalyses dTMP + ATP = dTDP + ADP. Phosphorylation of dTMP to form dTDP in both de novo and salvage pathways of dTTP synthesis. This is Thymidylate kinase from Pseudomonas putida (strain W619).